A 227-amino-acid polypeptide reads, in one-letter code: Hydroxylase/desaturase asaB (227 aa).

It belongs to the asaB hydroxylase/desaturase family.

Its pathway is secondary metabolite biosynthesis. Functionally, hydroxylase/desaturase; part of the gene cluster that mediates the biosynthesis of aspergillic acid, a hydroxamic acid-containing pyrazinone with aliphatic side chains that originates from leucine (Leu) and isoleucine (Ile). Aspergillic acid has antibiotic properties and was shown to be lethal to mice. The first step in the pathway is the production of deoxyaspergillic acid via a condensation between the Ile amine and the Leu carboxylic acid, followed by a reductive release from the protein forming the dipeptide aldehyde NH(2)-Leu-Ile-CHO, which could undergo an intermolecular cyclization resulting in a dihydropyrazinone. As the NRPS asaC lacks a condensation domain, it is improbable that it is responsible for condensation of Leu and Ile. One possibility is that asaC acts on a previously condensed dipeptide and functions as a Leu-Ile reductase to yield deoxyaspergillic acid. After asaC forms deoxyaspergillic acid, the cytochrome P450 asaD oxidizes the pyrazinone to the hydroxamic acid-containing bioactive metabolite aspergillic acid. The hydroxylase/desaturase asaB can then convert aspergillic acid to hydroxyaspergillic acid. Both aspergillic acid and hydroxyaspergillic acid can form complexes with iron producing ferriaspergillin analogs. This Aspergillus flavus (strain ATCC 200026 / FGSC A1120 / IAM 13836 / NRRL 3357 / JCM 12722 / SRRC 167) protein is Hydroxylase/desaturase asaB.